The following is a 506-amino-acid chain: tRNA-2-methylthio-N(6)-dimethylallyladenosine synthase (506 aa).

Positions 14 to 132 (KSYEVRTYGC…LPVLLERARV (119 aa)) constitute an MTTase N-terminal domain. Residues C23, C61, C95, C169, C173, and C176 each coordinate [4Fe-4S] cluster. Residues 155 to 386 (RESAYAAWVS…ALQEQISWDE (232 aa)) enclose the Radical SAM core domain. A TRAM domain is found at 388–456 (KKQVGRTLDV…PHHLLAEGTP (69 aa)).

The protein belongs to the methylthiotransferase family. MiaB subfamily. As to quaternary structure, monomer. The cofactor is [4Fe-4S] cluster.

The protein resides in the cytoplasm. It carries out the reaction N(6)-dimethylallyladenosine(37) in tRNA + (sulfur carrier)-SH + AH2 + 2 S-adenosyl-L-methionine = 2-methylsulfanyl-N(6)-dimethylallyladenosine(37) in tRNA + (sulfur carrier)-H + 5'-deoxyadenosine + L-methionine + A + S-adenosyl-L-homocysteine + 2 H(+). Catalyzes the methylthiolation of N6-(dimethylallyl)adenosine (i(6)A), leading to the formation of 2-methylthio-N6-(dimethylallyl)adenosine (ms(2)i(6)A) at position 37 in tRNAs that read codons beginning with uridine. This is tRNA-2-methylthio-N(6)-dimethylallyladenosine synthase from Streptomyces griseus subsp. griseus (strain JCM 4626 / CBS 651.72 / NBRC 13350 / KCC S-0626 / ISP 5235).